Here is a 366-residue protein sequence, read N- to C-terminus: Tetraacyldisaccharide 4'-kinase (366 aa).

62 to 69 provides a ligand contact to ATP; the sequence is RVGGTGKT.

The protein belongs to the LpxK family.

The catalysed reaction is a lipid A disaccharide + ATP = a lipid IVA + ADP + H(+). It functions in the pathway glycolipid biosynthesis; lipid IV(A) biosynthesis; lipid IV(A) from (3R)-3-hydroxytetradecanoyl-[acyl-carrier-protein] and UDP-N-acetyl-alpha-D-glucosamine: step 6/6. In terms of biological role, transfers the gamma-phosphate of ATP to the 4'-position of a tetraacyldisaccharide 1-phosphate intermediate (termed DS-1-P) to form tetraacyldisaccharide 1,4'-bis-phosphate (lipid IVA). This chain is Tetraacyldisaccharide 4'-kinase, found in Polynucleobacter necessarius subsp. necessarius (strain STIR1).